A 436-amino-acid chain; its full sequence is Trigger factor (436 aa).

The region spanning Gly163 to Pro248 is the PPIase FKBP-type domain.

Belongs to the FKBP-type PPIase family. Tig subfamily.

The protein resides in the cytoplasm. The catalysed reaction is [protein]-peptidylproline (omega=180) = [protein]-peptidylproline (omega=0). Functionally, involved in protein export. Acts as a chaperone by maintaining the newly synthesized protein in an open conformation. Functions as a peptidyl-prolyl cis-trans isomerase. The protein is Trigger factor of Paracidovorax citrulli (strain AAC00-1) (Acidovorax citrulli).